The following is a 117-amino-acid chain: Large ribosomal subunit protein uL18 (117 aa).

This sequence belongs to the universal ribosomal protein uL18 family. Part of the 50S ribosomal subunit; part of the 5S rRNA/L5/L18/L25 subcomplex. Contacts the 5S and 23S rRNAs.

In terms of biological role, this is one of the proteins that bind and probably mediate the attachment of the 5S RNA into the large ribosomal subunit, where it forms part of the central protuberance. This chain is Large ribosomal subunit protein uL18, found in Sodalis glossinidius (strain morsitans).